We begin with the raw amino-acid sequence, 333 residues long: S-adenosylmethionine-dependent nucleotide dehydratase (333 aa).

The region spanning 1–239 (MNIKTIVINW…SAPQKQNNVI (239 aa)) is the Radical SAM core domain. Residues Cys-16, Cys-20, and Cys-23 each contribute to the [4Fe-4S] cluster site.

It belongs to the radical SAM superfamily. Viperin family. It depends on [4Fe-4S] cluster as a cofactor.

The catalysed reaction is GTP + AH2 + S-adenosyl-L-methionine = 3'-deoxy-3',4'-didehydro-GTP + 5'-deoxyadenosine + L-methionine + A + H2O + H(+). Its function is as follows. Expression of pVip56 in E.coli (strain MG1655) confers resistance to phage P1; has no effect against T7. Catalyzes the conversion of guanosine triphosphate (GTP) to 3'-deoxy-3',4'-didehydro-GTP (ddhGTP), probably via a SAM-dependent radical mechanism. The modified nucleotide represses transcription from T7 RNA polymerase-directed genes (possibly by acting as chain terminators), strongly suggesting these nucleotides block viral polymerase transcription. How this protein allows bacteria to resist viruses that do not encode their own RNA polymerase (such as lambda, P1) is unknown. This chain is S-adenosylmethionine-dependent nucleotide dehydratase, found in Fibrobacter sp. (strain UWH6).